A 229-amino-acid chain; its full sequence is Ribose-5-phosphate isomerase A (229 aa).

Substrate-binding positions include 28–31 (TGST), 84–87 (DGAD), and 97–100 (KGGG). Catalysis depends on glutamate 106, which acts as the Proton acceptor. Residue lysine 124 participates in substrate binding.

Belongs to the ribose 5-phosphate isomerase family. Homodimer.

It catalyses the reaction aldehydo-D-ribose 5-phosphate = D-ribulose 5-phosphate. It participates in carbohydrate degradation; pentose phosphate pathway; D-ribose 5-phosphate from D-ribulose 5-phosphate (non-oxidative stage): step 1/1. In terms of biological role, catalyzes the reversible conversion of ribose-5-phosphate to ribulose 5-phosphate. In Lacticaseibacillus paracasei (strain ATCC 334 / BCRC 17002 / CCUG 31169 / CIP 107868 / KCTC 3260 / NRRL B-441) (Lactobacillus paracasei), this protein is Ribose-5-phosphate isomerase A.